The primary structure comprises 611 residues: Serine/arginine repetitive matrix protein 4 (611 aa).

2 disordered regions span residues 38 to 248 and 263 to 611; these read ARKP…PLQM and SAAD…STRR. Basic residues-rich tracts occupy residues 107–123 and 131–189; these read RGKK…RRRS and VKKK…HRCP. Positions 190 to 202 are enriched in low complexity; that stretch reads SRSQSSESRPSSC. Residues 203–216 are compositionally biased toward basic and acidic residues; it reads ESRHRGRSPEEGQK. A compositionally biased stretch (basic residues) spans 217 to 226; sequence SRRRHSRRCS. A compositionally biased stretch (polar residues) spans 270-290; it reads KTASPLTTSRGRSQEYDSGND. Residues 291-301 are compositionally biased toward low complexity; sequence TSSPPSTQTSS. Residues 322–341 show a composition bias toward polar residues; the sequence is LNSGNTSDSGNSFTTSSPQN. 2 stretches are compositionally biased toward low complexity: residues 390-422 and 430-461; these read SRSS…SRST and SRSP…SRYS. Residues 462–482 show a composition bias toward basic and acidic residues; it reads PSRERDPKYSEKDSQQRERER. The span at 483-498 shows a compositional bias: basic residues; it reads ARRRRRSYSPMRKRRR. Basic and acidic residues predominate over residues 499–508; sequence DSPSHLEARR. The segment covering 522–549 has biased composition (low complexity); sequence PSPSSSGSLSSTSSWYSSSSSRSASRSY. The segment covering 550–564 has biased composition (basic residues); it reads SRSRSRSRSRRRSRT. Low complexity predominate over residues 565–580; that stretch reads RTSSSSSSRSPSPGSR. Positions 581–595 are enriched in basic residues; the sequence is SRSRSRSRSRSRSRS. A compositionally biased stretch (low complexity) spans 596 to 611; that stretch reads QSRSYSSADSYSSTRR.

This sequence belongs to the nSR100 family. Phosphorylated. Specifically expressed in neuronal cells (at protein level). Expressed in the cerebellum.

The protein localises to the nucleus. In terms of biological role, splicing factor specifically required for neural cell differentiation. Acts in conjunction with nPTB/PTBP2 by binding directly to its regulated target transcripts and promotes neural-specific exon inclusion in many genes that function in neural cell differentiation. Required to promote the inclusion of neural-specific exon 10 in nPTB/PTBP2, leading to increased expression of neural-specific nPTB/PTBP2. Also promotes the inclusion of exon 16 in DAAM1 in neuron extracts. Promotes alternative splicing of REST transcripts to produce REST isoform 3 (REST4) with greatly reduced repressive activity, thereby activating expression of REST targets in neural cells. Plays an important role during embryonic development as well as in the proper functioning of the adult nervous system. Regulates alternative splicing events in genes with important neuronal functions. This is Serine/arginine repetitive matrix protein 4 (SRRM4) from Homo sapiens (Human).